We begin with the raw amino-acid sequence, 107 residues long: DNA polymerase delta subunit 4 (107 aa).

The short motif at 1 to 16 (MGRKRLITDSYPVVKR) is the PCNA-interaction protein motif (PIP box) element. The disordered stretch occupies residues 1–35 (MGRKRLITDSYPVVKRREGSAGHSKGELAPDLGEE). A compositionally biased stretch (basic and acidic residues) spans 15–28 (KRREGSAGHSKGEL).

Belongs to the DNA polymerase delta subunit 4 family. Component of the tetrameric DNA polymerase delta complex (Pol-delta4), which consists of POLD1/p125, POLD2/p50, POLD3/p66/p68 and POLD4/p12, with POLD1 bearing DNA polymerase and 3' to 5' proofreading exonuclease activities. Within this complex, directly interacts with POLD1 and POLD2. Directly interacts with PCNA, as do POLD1 and POLD3; this interaction stimulates Pol-delta4 polymerase activity. As POLD1 and POLD2, directly interacts with WRNIP1; this interaction stimulates DNA polymerase delta-mediated DNA synthesis, independently of the presence of PCNA, possibly by increasing initiation frequency. Upon genotoxic stress induced by DNA damaging agents or by replication stress, POLD4 is proteolytically degraded and Pol-delta4 is converted into a trimeric form of the complex (Pol-delta3) that has an increased proofreading activity. The DNA polymerase delta complex interacts with POLDIP2; this interaction is probably mediated through direct binding to POLD2. Post-translationally, ubiquitinated; undergoes 'Lys-48'-linked ubiquitination in response to UV irradiation, leading to proteasomal degradation. This modification is partly mediated by RNF8 and by the DCX(DTL) E3 ubiquitin ligase complex (also called CRL4(CDT2)). Efficient degradation requires the presence of PCNA and is required for the inhibition of fork progression after DNA damage.

Its subcellular location is the nucleus. In terms of biological role, as a component of the tetrameric DNA polymerase delta 4 complex (Pol-delta4), plays a role in high fidelity genome replication and repair. Within this complex, increases the rate of DNA synthesis and decreases fidelity by regulating POLD1 polymerase and proofreading 3' to 5' exonuclease activity. Pol-delta4 participates in Okazaki fragment processing, through both the short flap pathway, as well as a nick translation system. Under conditions of DNA replication stress, required for the repair of broken replication forks through break-induced replication (BIR), a mechanism that may induce segmental genomic duplications of up to 200 kb. Involved in Pol-delta4 translesion synthesis (TLS) of templates carrying O6-methylguanine or abasic sites. Its degradation in response to DNA damage is required for the inhibition of fork progression and cell survival. The polypeptide is DNA polymerase delta subunit 4 (POLD4) (Bos taurus (Bovine)).